Here is an 891-residue protein sequence, read N- to C-terminus: Inter-alpha-trypsin inhibitor heavy chain H3 (891 aa).

An N-terminal signal peptide occupies residues 1 to 20; that stretch reads MALAQWPYLILALLSGLAVS. A propeptide spanning residues 21 to 34 is cleaved from the precursor; the sequence is GFPRNPSLLLGKRS. Residues 29 to 158 form the VIT domain; sequence LLGKRSLPGR…KVTFELTYEE (130 aa). N-linked (GlcNAc...) asparagine glycosylation is present at N91. In terms of domain architecture, VWFA spans 284–467; that stretch reads SVVFVIDVSG…LQLQGFYEEV (184 aa). Aspartate 1-(chondroitin 4-sulfate)-ester is present on D651. A propeptide spanning residues 652–891 is cleaved from the precursor; it reads PHFIIQIPEK…HRDYIVPNLF (240 aa).

This sequence belongs to the ITIH family. As to quaternary structure, I-alpha-I plasma protease inhibitors are assembled from one or two heavy chains (H1, H2 or H3) and one light chain, bikunin. Inter-alpha-inhibitor (I-alpha-I) is composed of H1, H2 and bikunin, inter-alpha-like inhibitor (I-alpha-LI) of H2 and bikunin, and pre-alpha-inhibitor (P-alpha-I) of H3 and bikunin.

It localises to the secreted. Functionally, may act as a carrier of hyaluronan in serum or as a binding protein between hyaluronan and other matrix protein, including those on cell surfaces in tissues to regulate the localization, synthesis and degradation of hyaluronan which are essential to cells undergoing biological processes. The chain is Inter-alpha-trypsin inhibitor heavy chain H3 (ITIH3) from Bos taurus (Bovine).